The chain runs to 1482 residues: Cystic fibrosis transmembrane conductance regulator (1482 aa).

Topologically, residues 1-77 are cytoplasmic; it reads MQRSPLEKAS…KLINALRRCF (77 aa). The chain crosses the membrane as a helical span at residues 78–98; sequence FWRFTFYGIILYLGEVTKAVQ. In terms of domain architecture, ABC transmembrane type-1 1 spans 81 to 365; sequence FTFYGIILYL…WAVQTWYDSL (285 aa). Topologically, residues 99 to 122 are extracellular; it reads PLLLGRIIASYDPDNKVERSIAIY. A helical membrane pass occupies residues 123–146; sequence LAVGLCLLFVVRTLLLHPAIFGLH. At 147–195 the chain is on the cytoplasmic side; that stretch reads HIGMQMRIAMFSLIYKKTLKLSSRVLDKISIGQLVSLLSNNLNKFDEGL. A helical membrane pass occupies residues 196-216; that stretch reads ALAHFVWIAPLQVTLLMGLLW. Residues 217–222 are Extracellular-facing; sequence DLLQAS. A helical membrane pass occupies residues 223 to 243; that stretch reads AFSGLGVLIILACFQAGFGRM. The Cytoplasmic segment spans residues 244 to 298; the sequence is MMKYRDQRAGKINERLVITSEMIENIQSVKAYCWEEALEKMIENFRQSELRLTRK. Residues 299 to 319 form a helical membrane-spanning segment; it reads AAYVRYFNSSAFFFSGFFVVF. The Extracellular segment spans residues 320–339; sequence LSVLPYALIKGIILRKIFTT. Residues 340–358 traverse the membrane as a helical segment; it reads ISFCIVLRMAVTRQFPWAV. The Cytoplasmic portion of the chain corresponds to 359–859; sequence QTWYDSLGAI…YLRYITVHKR (501 aa). Residues Trp-401, Ser-434, 458–465, and Gln-493 contribute to the ATP site; that span reads GSTGAGKT. Residues 423 to 646 enclose the ABC transporter 1 domain; the sequence is NVDNSLFFSN…RPDFSSKLMG (224 aa). Cys-524 carries S-palmitoyl cysteine lipidation. Phosphoserine is present on residues Ser-549 and Ser-660. Residues 654–832 are disordered R region; it reads SAERRNSIIT…EEINEEDLKE (179 aa). Ser-670 bears the Phosphoserine; by PKA mark. The residue at position 686 (Ser-686) is a Phosphoserine. Residue Lys-688 forms a Glycyl lysine isopeptide (Lys-Gly) (interchain with G-Cter in ubiquitin) linkage. Phosphoserine occurs at positions 700 and 712. Thr-717 carries the phosphothreonine modification. Phosphoserine is present on residues Ser-737, Ser-768, Ser-796, and Ser-814. The helical transmembrane segment at 860-880 threads the bilayer; that stretch reads LIFVLIWCFVVFLIEVAASLV. An ABC transmembrane type-1 2 domain is found at 860 to 1156; sequence LIFVLIWCFV…AVNSSIDVDS (297 aa). Topologically, residues 881–919 are extracellular; the sequence is LLCLLSKVSPEDKGNTTKSANDSSAVIITSTSSFYFLYI. 2 N-linked (GlcNAc...) asparagine glycosylation sites follow: Asn-895 and Asn-901. Residues 920–940 traverse the membrane as a discontinuously helical segment; the sequence is YVGVADTFLALGLFRGLPLVH. Topologically, residues 941–991 are cytoplasmic; sequence TLITVSKILHHKMLHSVLQAPMSTLNTLKAGGILNRFSKDIAILDDLLPLT. The chain crosses the membrane as a helical span at residues 992 to 1012; sequence IFDFIQLLLIVIGAVAVVSIL. The Extracellular segment spans residues 1013–1014; sequence KP. The helical transmembrane segment at 1015-1035 threads the bilayer; it reads YIFLATVPVIVAFVLLRAYFL. At 1036-1096 the chain is on the cytoplasmic side; that stretch reads HTSQQLKQLE…TANWFLYLST (61 aa). The helical transmembrane segment at 1097 to 1117 threads the bilayer; the sequence is LRWFQMRIEMIFVIFFIAVTF. Topologically, residues 1118–1131 are extracellular; that stretch reads ISILTTGEGEGTVG. The helical transmembrane segment at 1132–1152 threads the bilayer; that stretch reads IILTLAMNIMSTLQWAVNSSI. The Cytoplasmic portion of the chain corresponds to 1153–1482; the sequence is DVDSLMRSVS…TEEEVQDTRL (330 aa). Positions 1212 to 1445 constitute an ABC transporter 2 domain; it reads MTVKDLTAKY…KSLFRQAISP (234 aa). Residues Tyr-1221 and 1246 to 1253 each bind ATP; that span reads GRTGSGKS. The interval 1388-1482 is interaction with GORASP2; sequence RTLKQAFADC…TEEEVQDTRL (95 aa). Cys-1397 is lipidated: S-palmitoyl cysteine. Ser-1446 is subject to Phosphoserine. The interval 1450 to 1482 is disordered; sequence KLFPHQNSGKHKSRSKITALKEETEEEVQDTRL. Acidic residues predominate over residues 1472-1482; it reads ETEEEVQDTRL. Residues 1480–1482 carry the PDZ-binding motif; that stretch reads TRL.

Belongs to the ABC transporter superfamily. ABCC family. CFTR transporter (TC 3.A.1.202) subfamily. As to quaternary structure, monomer; does not require oligomerization for channel activity. May form oligomers in the membrane. Interacts with SLC26A3, SLC26A6 and NHERF1. Interacts with SHANK2. Interacts with MYO6. Interacts (via C-terminus) with GOPC (via PDZ domain); this promotes CFTR internalization and thereby decreases channel activity. Interacts with SLC4A7 through NHERF1. Found in a complex with MYO5B and RAB11A. Interacts with ANO1. Interacts with SLC26A8. Interacts with AHCYL1; the interaction increases CFTR activity. Interacts with CSE1L. The core-glycosylated form interacts with GORASP2 (via PDZ GRASP-type 1 domain) in respone to ER stress. Interacts with MARCHF2; the interaction leads to CFTR ubiqtuitination and degradation. Interacts with ADGRG2. N-glycosylated. In terms of processing, phosphorylated; cAMP treatment promotes phosphorylation and activates the channel. Dephosphorylation decreases the ATPase activity (in vitro). Phosphorylation at PKA sites activates the channel. Phosphorylation at PKC sites enhances the response to phosphorylation by PKA. Phosphorylated by AMPK; this inhibits channel activity. Post-translationally, ubiquitinated, leading to its degradation in the lysosome. Deubiquitination by USP10 in early endosomes enhances its endocytic recycling to the cell membrane. Ubiquitinated by RNF185 during ER stress. Ubiquitinated by MARCHF2.

The protein resides in the apical cell membrane. It localises to the early endosome membrane. It is found in the cell membrane. Its subcellular location is the recycling endosome membrane. The protein localises to the endoplasmic reticulum membrane. The protein resides in the nucleus. The enzyme catalyses ATP + H2O + closed Cl(-) channel = ADP + phosphate + open Cl(-) channel.. It catalyses the reaction chloride(in) = chloride(out). The catalysed reaction is hydrogencarbonate(in) = hydrogencarbonate(out). It carries out the reaction ATP + H2O = ADP + phosphate + H(+). In terms of biological role, epithelial ion channel that plays an important role in the regulation of epithelial ion and water transport and fluid homeostasis. Mediates the transport of chloride ions across the cell membrane. Possesses an intrinsic ATPase activity and utilizes ATP to gate its channel; the passive flow of anions through the channel is gated by cycles of ATP binding and hydrolysis by the ATP-binding domains. The ion channel is also permeable to HCO(3)(-); selectivity depends on the extracellular chloride concentration. Exerts its function also by modulating the activity of other ion channels and transporters. Contributes to the regulation of the pH and the ion content of the epithelial fluid layer. Modulates the activity of the epithelial sodium channel (ENaC) complex, in part by regulating the cell surface expression of the ENaC complex. May regulate bicarbonate secretion and salvage in epithelial cells by regulating the transporter SLC4A7. Can inhibit the chloride channel activity of ANO1. Plays a role in the chloride and bicarbonate homeostasis during sperm epididymal maturation and capacitation. The protein is Cystic fibrosis transmembrane conductance regulator of Dasypus novemcinctus (Nine-banded armadillo).